The following is a 291-amino-acid chain: uncharacterized protein (291 aa).

The PNPLA domain occupies 5–196; that stretch reads GVFSGGGVKG…LSNFPIWLFS (192 aa). Positions 9 to 14 match the GXGXXG motif; that stretch reads GGGVKG. Residues 34-50 traverse the membrane as a helical segment; it reads VAGTSAGAIIAAFIASG. A GXSXG motif is present at residues 36–40; it reads GTSAG. The Nucleophile role is filled by S38. The Proton acceptor role is filled by D183. The DGA/G motif lies at 183–185; that stretch reads DGG.

It is found in the cell membrane. Probable lipid hydrolase. This is an uncharacterized protein from Bacillus subtilis (strain 168).